Here is a 964-residue protein sequence, read N- to C-terminus: E3 ubiquitin-protein ligase TRIM37 (964 aa).

Methionine 1 carries the N-acetylmethionine modification. The RING-type; degenerate zinc-finger motif lies at 15 to 55 (CFICMEKLRDARLCPHCSKLCCFSCIRRWLTEQRAQCPHCR). A B box-type zinc finger spans residues 90–132 (NEKDKCENHHEKLSVFCWTCKKCICHQCALWGGMHGGHTFKPL). Zn(2+) is bound by residues cysteine 95, histidine 98, cysteine 117, and histidine 124. The stretch at 132–234 (LAEIYEQHVT…VEHQLRSCSK (103 aa)) forms a coiled coil. One can recognise an MATH domain in the interval 276–403 (YDSATFVLEN…NDTVILRFQV (128 aa)). Residues 419–450 (ITQLEAAQTSYIQQINNLKERLTIELSRTQKS) adopt a coiled-coil conformation. Serine 454 bears the Phosphoserine mark. Disordered stretches follow at residues 477–513 (CSDM…HHEL), 530–554 (QLDG…IDEE), and 640–663 (RPPA…RKQQ). Basic and acidic residues predominate over residues 503-513 (KIQNEDYHHEL). Residues 534-544 (SSSSASSTATS) are compositionally biased toward low complexity. The stretch at 673-700 (KMLKRLKTQMAEVRCMKTDVKNTLSEIK) forms a coiled coil. Residues 752-761 (NSTNKKSNSP) show a composition bias toward polar residues. Disordered regions lie at residues 752–812 (NSTN…SPRA) and 891–964 (GASA…NSGR). Basic and acidic residues predominate over residues 776-788 (RAVDPGENSRSKG). The span at 794–807 (SEGSPGSSQSGSRH) shows a compositional bias: low complexity. A compositionally biased stretch (acidic residues) spans 904–916 (SDIECDTENEEQE). Residues 955-964 (SFNTDENSGR) are compositionally biased toward polar residues.

This sequence belongs to the TRIM/RBCC family. As to quaternary structure, associates with the PRC2/EED-EZH2 complex. Auto-ubiquitinated. As to expression, ubiquitous. Highly expressed in testis, while it is weakly expressed in other tissues.

It localises to the chromosome. The protein resides in the cytoplasm. Its subcellular location is the perinuclear region. The protein localises to the peroxisome membrane. It catalyses the reaction S-ubiquitinyl-[E2 ubiquitin-conjugating enzyme]-L-cysteine + [acceptor protein]-L-lysine = [E2 ubiquitin-conjugating enzyme]-L-cysteine + N(6)-ubiquitinyl-[acceptor protein]-L-lysine.. Its pathway is protein modification; protein ubiquitination. E3 ubiquitin-protein ligase required to prevent centriole reduplication. Probably acts by ubiquitinating positive regulators of centriole reduplication. Mediates monoubiquitination of 'Lys-119' of histone H2A (H2AK119Ub), a specific tag for epigenetic transcriptional repression: associates with some Polycomb group (PcG) multiprotein PRC2-like complex and mediates repression of target genes. Also acts as a positive regulator of peroxisome import by mediating monoubiquitination of PEX5 at 'Lys-472': monoubiquitination promotes PEX5 stabilitation by preventing its polyubiquitination and degradation by the proteasome. Has anti-HIV activity. This Homo sapiens (Human) protein is E3 ubiquitin-protein ligase TRIM37.